The following is a 362-amino-acid chain: Protein Tob1 (362 aa).

Residues 22-39 carry the Bipartite nuclear localization signal motif; it reads RRRVNIFGEELERLLKKK. The important for nuclear localization stretch occupies residues 82 to 92; it reads VRGNLPQDLSV. The span at 144-160 shows a compositional bias: low complexity; that stretch reads DPASSVSSSPSPPFGHS. The interval 144–171 is disordered; that stretch reads DPASSVSSSPSPPFGHSAAVSPTFMPRS. Positions 161–220 are required for interaction with CPEB3; that stretch reads AAVSPTFMPRSTQPLTFTTATFAATKFGSTKMKNSGRSSKVARTSPINLGLTVNVNDLLK. Phosphothreonine is present on Thr-204. The Nuclear export signal motif lies at 228–236; it reads VHSLYGLGL. The tract at residues 234–284 is disordered; sequence LGLGSQQQPQPQPQQQQQQQPSSSQPPPPLPQQQQQQPQQQQQQQQQTSAL. 2 stretches are compositionally biased toward low complexity: residues 238–256 and 265–280; these read SQQQ…QPSS and QQQQ…QQQQ.

It belongs to the BTG family. In terms of assembly, interacts with ERBB2. Interacts with CNOT7. Interacts with CPEB3 (via C-terminal RNA-binding region); recruits CNOT7 to CPEB3 to form a ternary complex required for mRNA deadenylation and decay. Interacts with CNOT8. Interacts with CPEB4. In terms of processing, phosphorylated on Ser and Thr residues. In terms of tissue distribution, ubiquitous.

It is found in the cytoplasm. Its subcellular location is the nucleus. Its function is as follows. Anti-proliferative protein; the function is mediated by association with deadenylase subunits of the CCR4-NOT complex. Mediates CPEB3-accelerated mRNA deadenylation by binding to CPEB3 and recruiting CNOT7 which leads to target mRNA deadenylation and decay. The chain is Protein Tob1 (Tob1) from Mus musculus (Mouse).